Consider the following 684-residue polypeptide: 1,4-alpha-glucan-branching enzyme (684 aa).

(1,4-alpha-D-glucosyl)n-binding residues include W88 and K123. D340 functions as the Nucleophile in the catalytic mechanism. E395 functions as the Proton donor in the catalytic mechanism.

Belongs to the glycosyl hydrolase 13 family. GlgB subfamily.

The protein resides in the cytoplasm. It catalyses the reaction Transfers a segment of a (1-&gt;4)-alpha-D-glucan chain to a primary hydroxy group in a similar glucan chain.. Its pathway is glycan biosynthesis; glycogen biosynthesis. In terms of biological role, glycogen-branching enzyme participates in the glycogen biosynthetic process along with glycogenin and glycogen synthase. Generates alpha-1,6-glucosidic branches from alpha-1,4-linked glucose chains, to increase solubility of the glycogen polymer. In Emericella nidulans (strain FGSC A4 / ATCC 38163 / CBS 112.46 / NRRL 194 / M139) (Aspergillus nidulans), this protein is 1,4-alpha-glucan-branching enzyme (be1).